The sequence spans 165 residues: Phosphopantetheine adenylyltransferase (165 aa).

Thr9 lines the substrate pocket. ATP-binding positions include Thr9–Phe10 and His17. Residues Lys41, Leu78, and Arg92 each contribute to the substrate site. Residues Gly93–Arg95, Glu103, and His128–Lys134 each bind ATP.

Belongs to the bacterial CoaD family. In terms of assembly, homohexamer. Mg(2+) is required as a cofactor.

It localises to the cytoplasm. The enzyme catalyses (R)-4'-phosphopantetheine + ATP + H(+) = 3'-dephospho-CoA + diphosphate. It participates in cofactor biosynthesis; coenzyme A biosynthesis; CoA from (R)-pantothenate: step 4/5. Its function is as follows. Reversibly transfers an adenylyl group from ATP to 4'-phosphopantetheine, yielding dephospho-CoA (dPCoA) and pyrophosphate. The sequence is that of Phosphopantetheine adenylyltransferase from Ruegeria sp. (strain TM1040) (Silicibacter sp.).